The sequence spans 469 residues: Aspartyl/glutamyl-tRNA(Asn/Gln) amidotransferase subunit B (469 aa).

This sequence belongs to the GatB/GatE family. GatB subfamily. In terms of assembly, heterotrimer of A, B and C subunits.

The enzyme catalyses L-glutamyl-tRNA(Gln) + L-glutamine + ATP + H2O = L-glutaminyl-tRNA(Gln) + L-glutamate + ADP + phosphate + H(+). It catalyses the reaction L-aspartyl-tRNA(Asn) + L-glutamine + ATP + H2O = L-asparaginyl-tRNA(Asn) + L-glutamate + ADP + phosphate + 2 H(+). In terms of biological role, allows the formation of correctly charged Asn-tRNA(Asn) or Gln-tRNA(Gln) through the transamidation of misacylated Asp-tRNA(Asn) or Glu-tRNA(Gln) in organisms which lack either or both of asparaginyl-tRNA or glutaminyl-tRNA synthetases. The reaction takes place in the presence of glutamine and ATP through an activated phospho-Asp-tRNA(Asn) or phospho-Glu-tRNA(Gln). The protein is Aspartyl/glutamyl-tRNA(Asn/Gln) amidotransferase subunit B of Methanococcus maripaludis (strain DSM 14266 / JCM 13030 / NBRC 101832 / S2 / LL).